We begin with the raw amino-acid sequence, 158 residues long: Tryptophan-rich sensory protein (158 aa).

5 helical membrane-spanning segments follow: residues 5 to 25, 44 to 65, 73 to 93, 97 to 119, and 124 to 144; these read WALF…GALL, WVFP…MRVA, ALAF…VFFG, MATA…WAFF, and WAGV…GLNF.

Belongs to the TspO/BZRP family. In terms of assembly, homodimer.

It localises to the membrane. It is found in the cell inner membrane. In terms of biological role, may play a role in the transmembrane transport of tetrapyrroles and similar compounds, and thereby contribute to the regulation of tetrapyrrole biosynthesis. Binds tetrapyrroles and promotes the photooxidative degradation of protoporphyrin IX. Binds protoporphyrin IX, hemin, and coproporphyrin III, but does not bind delta-aminolevulinic acid. Can bind bilirubin, curcumin, gossypol, retinoic acid, cholesterol and the benzodiazepine receptor agonist PK-11195 (in vitro). Plays a role in the response to low oxygen levels and in the regulation of the biosynthesis of photosynthetic pigments. In Cereibacter sphaeroides (Rhodobacter sphaeroides), this protein is Tryptophan-rich sensory protein.